Here is a 163-residue protein sequence, read N- to C-terminus: Late embryogenesis abundant protein Dc3 (163 aa).

2 disordered regions span residues 1 to 117 (MASH…GGLM) and 139 to 163 (FGMA…ARTE). 3 stretches are compositionally biased toward basic and acidic residues: residues 28–56 (TMKD…ESKD), 67–84 (GAVK…KEKT), and 91–113 (TKEK…KEKT). 6 tandem repeats follow at residues 32-42 (KAQAAKDKASE), 43-53 (MAGSARDRTVE), 65-75 (KAGAVKDKTCE), 76-86 (TAQAAKEKTGG), 87-97 (AMQATKEKASE), and 103-115 (KETA…KTGG). The 6 X 11 AA approximate repeats stretch occupies residues 32-115 (KAQAAKDKAS…AVAGKEKTGG (84 aa)). The segment covering 152-163 (TTRVTRSSARTE) has biased composition (low complexity).

The protein belongs to the LEA type 4 family.

This Daucus carota (Wild carrot) protein is Late embryogenesis abundant protein Dc3.